The following is a 617-amino-acid chain: Proline--tRNA ligase (617 aa).

It belongs to the class-II aminoacyl-tRNA synthetase family. ProS type 1 subfamily. As to quaternary structure, homodimer.

The protein localises to the cytoplasm. It catalyses the reaction tRNA(Pro) + L-proline + ATP = L-prolyl-tRNA(Pro) + AMP + diphosphate. Functionally, catalyzes the attachment of proline to tRNA(Pro) in a two-step reaction: proline is first activated by ATP to form Pro-AMP and then transferred to the acceptor end of tRNA(Pro). As ProRS can inadvertently accommodate and process non-cognate amino acids such as alanine and cysteine, to avoid such errors it has two additional distinct editing activities against alanine. One activity is designated as 'pretransfer' editing and involves the tRNA(Pro)-independent hydrolysis of activated Ala-AMP. The other activity is designated 'posttransfer' editing and involves deacylation of mischarged Ala-tRNA(Pro). The misacylated Cys-tRNA(Pro) is not edited by ProRS. This is Proline--tRNA ligase from Streptococcus pneumoniae (strain 70585).